The chain runs to 137 residues: Large ribosomal subunit protein uL16 (137 aa).

This sequence belongs to the universal ribosomal protein uL16 family. As to quaternary structure, part of the 50S ribosomal subunit.

In terms of biological role, binds 23S rRNA and is also seen to make contacts with the A and possibly P site tRNAs. This Roseobacter denitrificans (strain ATCC 33942 / OCh 114) (Erythrobacter sp. (strain OCh 114)) protein is Large ribosomal subunit protein uL16.